Reading from the N-terminus, the 663-residue chain is Zinc finger protein GLI2 (663 aa).

The tract at residues 159-186 is disordered; the sequence is ISSNSNCISDSSQSKQSSESAVSSTVNP. The segment covering 160-182 has biased composition (low complexity); it reads SSNSNCISDSSQSKQSSESAVSS. C2H2-type zinc fingers lie at residues 234-259, 267-294, 300-324, 330-355, and 361-386; these read TNCH…NNDH, FVCR…MRRH, HKCT…LRSH, YVCE…NRTH, and YVCK…KTVH. Disordered regions lie at residues 374-440, 452-481, 544-578, and 619-663; these read DPSS…MEDC, VMCQ…DSGV, CSWV…SRTL, and SGIS…DIKL. The span at 386 to 402 shows a compositional bias: basic and acidic residues; that stretch reads HGPDAHVTKKQRNDVHP. The span at 456–473 shows a compositional bias: low complexity; it reads SSPGGQSSCSSEPSPLGS. Polar residues-rich tracts occupy residues 563–578 and 619–647; these read GNGS…SRTL and SGIS…SSAD.

This sequence belongs to the GLI C2H2-type zinc-finger protein family.

It localises to the nucleus. It is found in the cytoplasm. The protein localises to the cell projection. Its subcellular location is the cilium. Its function is as follows. Functions as a transcription regulator in the hedgehog (Hh) pathway. Functions as a transcriptional activator. May also function as transcriptional repressor. Binds to the DNA sequence 5'-GAACCACCCA-3'. Is involved in the smoothened (SHH) signaling pathway. Required for normal skeleton development. In Gallus gallus (Chicken), this protein is Zinc finger protein GLI2.